Consider the following 64-residue polypeptide: Large ribosomal subunit protein uL29 (64 aa).

The protein belongs to the universal ribosomal protein uL29 family.

The chain is Large ribosomal subunit protein uL29 from Ligilactobacillus salivarius (strain UCC118) (Lactobacillus salivarius).